The sequence spans 929 residues: Dual specificity protein phosphatase PHS1 (929 aa).

Disordered stretches follow at residues M1–D27 and P545–S618. 2 stretches are compositionally biased toward basic and acidic residues: residues H552–M580 and E591–H606. Residues K703 to G848 enclose the Tyrosine-protein phosphatase domain. The active-site Phosphocysteine intermediate is the C792. Residue C792–R798 coordinates substrate. Residues Q903–L911 carry the Nuclear export signal motif.

Interacts with MPK18. Expressed in roots, leaves and flowers.

It localises to the cytoplasm. It catalyses the reaction O-phospho-L-seryl-[protein] + H2O = L-seryl-[protein] + phosphate. It carries out the reaction O-phospho-L-threonyl-[protein] + H2O = L-threonyl-[protein] + phosphate. The catalysed reaction is O-phospho-L-tyrosyl-[protein] + H2O = L-tyrosyl-[protein] + phosphate. Probable dual specificity phosphatase that binds and dephosphorylates MPK18, modulating the organization and dynamics of cortical microtubules. Acts as a negative regulator of abscisic acid (ABA) signaling during seed germination and light-induced stomata aperture. In Arabidopsis thaliana (Mouse-ear cress), this protein is Dual specificity protein phosphatase PHS1 (PHS1).